The sequence spans 455 residues: Golgi pH regulator (455 aa).

5 helical membrane passes run 5-25 (IDSSIMITSQILFFGFGWLFF), 46-66 (VTFAFSCTMFELIIFEILGVL), 79-99 (LCVILLILVFMVPFYIGYFIV), 114-134 (CLLWLTFMYFFWKLGDPFPIL), and 150-170 (VGVIGVTLMALLSGFGAVNCP). Asparagine 180 carries an N-linked (GlcNAc...) asparagine glycan. The next 4 membrane-spanning stretches (helical) occupy residues 288-308 (FLGYFFSIYCVWKIFMATINI), 343-363 (ISFILVGIIIVTSIRGLLITL), 378-398 (VIVLLLAQIMGMYFVSSVLLI), and 425-445 (WFDVIFLVSALSSILFLYLAH).

The protein belongs to the Golgi pH regulator (TC 1.A.38) family. Homotrimer. Interacts with RABL3; the interaction stabilizes GPR89.

The protein resides in the golgi apparatus membrane. It carries out the reaction iodide(out) = iodide(in). The catalysed reaction is chloride(in) = chloride(out). It catalyses the reaction bromide(in) = bromide(out). The enzyme catalyses fluoride(in) = fluoride(out). In terms of biological role, voltage-gated channel that enables the transfer of monoatomic anions such as iodide, chloride, bromide and fluoride which may function in counter-ion conductance and participates in Golgi acidification. Plays a role in lymphocyte development, probably by acting as a RABL3 effector in hematopoietic cells. The chain is Golgi pH regulator from Mus musculus (Mouse).